Reading from the N-terminus, the 176-residue chain is METQGASLSLGRWSLWLLLLGLVVPLASAQALSYREAVLRAVGQLNERSSEANLYRLLELDPAPNDEVDPGTRKPVSFTVKETVCPRTTQQPPEECDFKENGLVKQCVGTVTLDPSNDQFDINCNELQSVRFRPPIRRPPIRPPFNPPFRPPVRPPFRPPFRPPFRPPIGPFPGRR.

The first 29 residues, 1 to 29, serve as a signal peptide directing secretion; that stretch reads METQGASLSLGRWSLWLLLLGLVVPLASA. The residue at position 30 (Gln30) is a Pyrrolidone carboxylic acid. A propeptide spanning residues 30–130 is cleaved from the precursor; it reads QALSYREAVL…DINCNELQSV (101 aa). Cystine bridges form between Cys85–Cys96 and Cys107–Cys124. A disordered region spans residues 135 to 176; sequence PIRRPPIRPPFNPPFRPPVRPPFRPPFRPPFRPPIGPFPGRR. The segment covering 141–176 has biased composition (pro residues); it reads IRPPFNPPFRPPVRPPFRPPFRPPFRPPIGPFPGRR. The residue at position 173 (Pro173) is a Proline amide. Residues 174–176 constitute a propeptide, removed in mature form; that stretch reads GRR.

It belongs to the cathelicidin family. In terms of processing, elastase is responsible for its maturation.

The protein localises to the secreted. Functionally, binds to the lipid A moiety of bacterial lipopolysaccharides (LPS), a glycolipid present in the outer membrane of all Gram-negative bacteria. Shows a potent antimicrobial activity against the Gram-negative bacteria E.coli, S.typhimurium and P.aeruginosa. Less active against the Gram-positive bacteria S.aureus, L.monocytogenes and B.subtilis. This Capra hircus (Goat) protein is Cathelicidin-2 (CATHL2).